The primary structure comprises 493 residues: Ribosomal protein uS12 methylthiotransferase RimO (493 aa).

Residues 5 to 121 (RTVALVTLGC…ISDRLQTILN (117 aa)) form the MTTase N-terminal domain. Positions 14, 50, and 84 each coordinate [4Fe-4S] cluster. The tract at residues 153 to 177 (LPGHGPTDLPEGVAPASGPRAPLRR) is disordered. The region spanning 179–410 (LDGSPVASVK…RLAEELVSQR (232 aa)) is the Radical SAM core domain. Residues cysteine 193, cysteine 197, and cysteine 200 each coordinate [4Fe-4S] cluster. Positions 412 to 482 (DERVGATVRV…GVDLVAEPLL (71 aa)) constitute a TRAM domain.

The protein belongs to the methylthiotransferase family. RimO subfamily. It depends on [4Fe-4S] cluster as a cofactor.

Its subcellular location is the cytoplasm. The enzyme catalyses L-aspartate(89)-[ribosomal protein uS12]-hydrogen + (sulfur carrier)-SH + AH2 + 2 S-adenosyl-L-methionine = 3-methylsulfanyl-L-aspartate(89)-[ribosomal protein uS12]-hydrogen + (sulfur carrier)-H + 5'-deoxyadenosine + L-methionine + A + S-adenosyl-L-homocysteine + 2 H(+). Its function is as follows. Catalyzes the methylthiolation of an aspartic acid residue of ribosomal protein uS12. This chain is Ribosomal protein uS12 methylthiotransferase RimO, found in Streptomyces coelicolor (strain ATCC BAA-471 / A3(2) / M145).